Here is a 209-residue protein sequence, read N- to C-terminus: Protein GrpE (209 aa).

Residues 1-13 (MSNDSSKAKQNQV) show a composition bias toward polar residues. A disordered region spans residues 1–33 (MSNDSSKAKQNQVDEAVEGEILTESEVETGNDE). Acidic residues predominate over residues 15 to 31 (EAVEGEILTESEVETGN).

It belongs to the GrpE family. In terms of assembly, homodimer.

It is found in the cytoplasm. Its function is as follows. Participates actively in the response to hyperosmotic and heat shock by preventing the aggregation of stress-denatured proteins, in association with DnaK and GrpE. It is the nucleotide exchange factor for DnaK and may function as a thermosensor. Unfolded proteins bind initially to DnaJ; upon interaction with the DnaJ-bound protein, DnaK hydrolyzes its bound ATP, resulting in the formation of a stable complex. GrpE releases ADP from DnaK; ATP binding to DnaK triggers the release of the substrate protein, thus completing the reaction cycle. Several rounds of ATP-dependent interactions between DnaJ, DnaK and GrpE are required for fully efficient folding. The chain is Protein GrpE from Shewanella woodyi (strain ATCC 51908 / MS32).